A 138-amino-acid polypeptide reads, in one-letter code: uncharacterized protein (138 aa).

The segment at 84–104 is disordered; that stretch reads PPKKTSPATSSSLKPRPGPRG. The segment covering 85–98 has biased composition (low complexity); sequence PKKTSPATSSSLKP.

To M.pneumoniae MPN_413 and MPN_463.

This is an uncharacterized protein from Mycoplasma pneumoniae (strain ATCC 29342 / M129 / Subtype 1) (Mycoplasmoides pneumoniae).